The sequence spans 383 residues: Mating-type protein MAT-1 (383 aa).

Positions 60 to 117 (KARKALNAFVGFRCYYVTIPMFKSWPMKKLSNLIGLLWEADPNKSLWSLMAKAWSTIR) form a DNA-binding region, alpha box.

Belongs to the MATALPHA1 family.

The protein localises to the nucleus. In terms of biological role, mating type proteins are sequence specific DNA-binding proteins that act as master switches in fungal differentiation by controlling gene expression in a cell type-specific fashion. Transcriptional activator that induces the transcription of alpha-specific genes. The protein is Mating-type protein MAT-1 (MAT1) of Cochliobolus heterostrophus (Southern corn leaf blight fungus).